The primary structure comprises 205 residues: Outer-membrane lipoprotein LolB (205 aa).

Positions 1 to 17 (MFLRHCITFTLIALLAG) are cleaved as a signal peptide. A lipid anchor (N-palmitoyl cysteine) is attached at Cys18. Cys18 carries S-diacylglycerol cysteine lipidation.

Belongs to the LolB family. In terms of assembly, monomer.

Its subcellular location is the cell outer membrane. Plays a critical role in the incorporation of lipoproteins in the outer membrane after they are released by the LolA protein. This Pseudomonas putida (strain W619) protein is Outer-membrane lipoprotein LolB.